We begin with the raw amino-acid sequence, 42 residues long: Photosystem I reaction center subunit IX (42 aa).

A helical transmembrane segment spans residues 8 to 28 (YLSTAPVIGVLWMTFTAGFII).

The protein belongs to the PsaJ family.

It is found in the plastid. Its subcellular location is the chloroplast thylakoid membrane. May help in the organization of the PsaE and PsaF subunits. The polypeptide is Photosystem I reaction center subunit IX (Pyropia yezoensis (Susabi-nori)).